Consider the following 372-residue polypeptide: tRNA-specific 2-thiouridylase MnmA (372 aa).

Residues 17–24 (GMSGGVDS) and Met43 contribute to the ATP site. An interaction with target base in tRNA region spans residues 103 to 105 (NPD). Catalysis depends on Cys108, which acts as the Nucleophile. An intrachain disulfide couples Cys108 to Cys205. Gly133 lines the ATP pocket. An interaction with tRNA region spans residues 155–157 (KDQ). Cys205 functions as the Cysteine persulfide intermediate in the catalytic mechanism. The segment at 317-318 (RY) is interaction with tRNA.

Belongs to the MnmA/TRMU family.

Its subcellular location is the cytoplasm. It catalyses the reaction S-sulfanyl-L-cysteinyl-[protein] + uridine(34) in tRNA + AH2 + ATP = 2-thiouridine(34) in tRNA + L-cysteinyl-[protein] + A + AMP + diphosphate + H(+). Functionally, catalyzes the 2-thiolation of uridine at the wobble position (U34) of tRNA, leading to the formation of s(2)U34. This chain is tRNA-specific 2-thiouridylase MnmA, found in Shewanella sediminis (strain HAW-EB3).